Reading from the N-terminus, the 114-residue chain is 11.9 kDa wall protein (114 aa).

A propeptide spanning residues 1–6 (MSFKTR) is cleaved from the precursor.

Its subcellular location is the secreted. The protein localises to the cell wall. Its function is as follows. May play a role in the structure of the hypha-forming fruit bodies. The protein is 11.9 kDa wall protein (TDF-1) of Tuber dryophilum (Truffle).